Here is a 62-residue protein sequence, read N- to C-terminus: MAVPKRKTSPSRRGMRRSADALKQPTYVEDKDSGELRRPHHLDLKTGMYRGRQILKPKTAEV.

The span at 1 to 16 (MAVPKRKTSPSRRGMR) shows a compositional bias: basic residues. The disordered stretch occupies residues 1-62 (MAVPKRKTSP…QILKPKTAEV (62 aa)). Residues 28–44 (VEDKDSGELRRPHHLDL) are compositionally biased toward basic and acidic residues.

The protein belongs to the bacterial ribosomal protein bL32 family.

This is Large ribosomal subunit protein bL32 from Azorhizobium caulinodans (strain ATCC 43989 / DSM 5975 / JCM 20966 / LMG 6465 / NBRC 14845 / NCIMB 13405 / ORS 571).